The primary structure comprises 570 residues: Glutamate--tRNA ligase (570 aa).

Residues 107–117 (PNPDFVLHLGS) carry the 'HIGH' region motif.

The protein belongs to the class-I aminoacyl-tRNA synthetase family. Glutamate--tRNA ligase type 2 subfamily.

The protein resides in the cytoplasm. The catalysed reaction is tRNA(Glu) + L-glutamate + ATP = L-glutamyl-tRNA(Glu) + AMP + diphosphate. Its function is as follows. Catalyzes the attachment of glutamate to tRNA(Glu) in a two-step reaction: glutamate is first activated by ATP to form Glu-AMP and then transferred to the acceptor end of tRNA(Glu). This is Glutamate--tRNA ligase from Pyrobaculum calidifontis (strain DSM 21063 / JCM 11548 / VA1).